A 350-amino-acid polypeptide reads, in one-letter code: Phenylalanine--tRNA ligase alpha subunit (350 aa).

Residue glutamate 271 participates in Mg(2+) binding.

Belongs to the class-II aminoacyl-tRNA synthetase family. Phe-tRNA synthetase alpha subunit type 1 subfamily. In terms of assembly, tetramer of two alpha and two beta subunits. It depends on Mg(2+) as a cofactor.

It localises to the cytoplasm. It catalyses the reaction tRNA(Phe) + L-phenylalanine + ATP = L-phenylalanyl-tRNA(Phe) + AMP + diphosphate + H(+). The sequence is that of Phenylalanine--tRNA ligase alpha subunit from Acidovorax ebreus (strain TPSY) (Diaphorobacter sp. (strain TPSY)).